A 490-amino-acid polypeptide reads, in one-letter code: Ribulose bisphosphate carboxylase large chain (490 aa).

Asparagine 127 and threonine 177 together coordinate substrate. Lysine 179 (proton acceptor) is an active-site residue. Residue lysine 181 coordinates substrate. Positions 205, 207, and 208 each coordinate Mg(2+). The residue at position 205 (lysine 205) is an N6-carboxylysine. Histidine 297 serves as the catalytic Proton acceptor. Arginine 298, histidine 330, and serine 382 together coordinate substrate.

It belongs to the RuBisCO large chain family. Type I subfamily. As to quaternary structure, heterohexadecamer of 8 large chains and 8 small chains. The cofactor is Mg(2+).

The protein localises to the plastid. It localises to the chloroplast. The catalysed reaction is 2 (2R)-3-phosphoglycerate + 2 H(+) = D-ribulose 1,5-bisphosphate + CO2 + H2O. It carries out the reaction D-ribulose 1,5-bisphosphate + O2 = 2-phosphoglycolate + (2R)-3-phosphoglycerate + 2 H(+). In terms of biological role, ruBisCO catalyzes two reactions: the carboxylation of D-ribulose 1,5-bisphosphate, the primary event in carbon dioxide fixation, as well as the oxidative fragmentation of the pentose substrate in the photorespiration process. Both reactions occur simultaneously and in competition at the same active site. This Phaeodactylum tricornutum (strain CCAP 1055/1) protein is Ribulose bisphosphate carboxylase large chain.